The primary structure comprises 288 residues: Probable prolyl 4-hydroxylase 6 (288 aa).

The Cytoplasmic portion of the chain corresponds to 1–4 (MDSQ). A helical; Signal-anchor for type II membrane protein transmembrane segment spans residues 5–27 (YFLAFSLSLLLIFSQISSFSFSV). Topologically, residues 28–288 (DPTRITQLSW…GFCRKSCKAC (261 aa)) are lumenal. In terms of domain architecture, Fe2OG dioxygenase spans 116 to 238 (NGEALQILHY…KWSATRWIHV (123 aa)). Positions 134 and 136 each coordinate Fe cation. 2 N-linked (GlcNAc...) asparagine glycosylation sites follow: asparagine 160 and asparagine 210. Histidine 219 is a Fe cation binding site. Lysine 229 serves as a coordination point for 2-oxoglutarate. Residues 248 to 288 (CVDDHESCQEWADAGECEKNPMYMVGSETSLGFCRKSCKAC) enclose the ShKT domain. 3 disulfide bridges follow: cysteine 248-cysteine 288, cysteine 255-cysteine 281, and cysteine 264-cysteine 285.

It belongs to the P4HA family. Fe(2+) is required as a cofactor. It depends on L-ascorbate as a cofactor.

It is found in the endoplasmic reticulum membrane. The catalysed reaction is L-prolyl-[collagen] + 2-oxoglutarate + O2 = trans-4-hydroxy-L-prolyl-[collagen] + succinate + CO2. Functionally, catalyzes the post-translational formation of 4-hydroxyproline in -Xaa-Pro-Gly- sequences in proline-rich peptide sequences of plant glycoproteins and other proteins. Hydroxyprolines are important constituent of many plant cell wall glycoproteins such as extensins, hydroxyproline-rich glycoproteins, lectins and arabinogalactan proteins. The chain is Probable prolyl 4-hydroxylase 6 from Arabidopsis thaliana (Mouse-ear cress).